Consider the following 226-residue polypeptide: Large ribosomal subunit protein uL3 (226 aa).

N5-methylglutamine is present on Gln-160.

It belongs to the universal ribosomal protein uL3 family. Part of the 50S ribosomal subunit. Forms a cluster with proteins L14 and L19. Post-translationally, methylated by PrmB.

Its function is as follows. One of the primary rRNA binding proteins, it binds directly near the 3'-end of the 23S rRNA, where it nucleates assembly of the 50S subunit. This Leptothrix cholodnii (strain ATCC 51168 / LMG 8142 / SP-6) (Leptothrix discophora (strain SP-6)) protein is Large ribosomal subunit protein uL3.